The sequence spans 547 residues: DEAD-box ATP-dependent RNA helicase 31 (547 aa).

Residues 1–34 (MFDFGLSEDDSELGEVDEDDGPSGFEDDLFDDEG) are compositionally biased toward acidic residues. Positions 1 to 74 (MFDFGLSEDD…HTRESGGGDS (74 aa)) are disordered. Positions 53 to 70 (IKGEPIDQEGVVHTRESG) are enriched in basic and acidic residues. The Q motif motif lies at 79 to 107 (TRFDECSLSPLTLKGVKAAGYERMTAVQE). The 184-residue stretch at 110–293 (LPIILKGKDV…HIAMKRDLEF (184 aa)) folds into the Helicase ATP-binding domain. 123–130 (AKTGTGKT) contributes to the ATP binding site. The DEAD box motif lies at 241-244 (DEAD). The Helicase C-terminal domain occupies 327–478 (LLTDHISENV…TKRKVEKALA (152 aa)).

The protein belongs to the DEAD box helicase family.

It carries out the reaction ATP + H2O = ADP + phosphate + H(+). In Oryza sativa subsp. japonica (Rice), this protein is DEAD-box ATP-dependent RNA helicase 31.